Here is a 296-residue protein sequence, read N- to C-terminus: Phosphoribosylaminoimidazole-succinocarboxamide synthase (296 aa).

It belongs to the SAICAR synthetase family.

It carries out the reaction 5-amino-1-(5-phospho-D-ribosyl)imidazole-4-carboxylate + L-aspartate + ATP = (2S)-2-[5-amino-1-(5-phospho-beta-D-ribosyl)imidazole-4-carboxamido]succinate + ADP + phosphate + 2 H(+). The protein operates within purine metabolism; IMP biosynthesis via de novo pathway; 5-amino-1-(5-phospho-D-ribosyl)imidazole-4-carboxamide from 5-amino-1-(5-phospho-D-ribosyl)imidazole-4-carboxylate: step 1/2. The protein is Phosphoribosylaminoimidazole-succinocarboxamide synthase of Desulfotalea psychrophila (strain LSv54 / DSM 12343).